Here is a 101-residue protein sequence, read N- to C-terminus: MAKQSMKAREVKRVALADKYFAKRAELKAIISDVNASDEDRWNAVLKLQSLPRDSSPSRQRNRCRQTGRPHGYVGKFGLSRIKLREAAMRGEVPGLKKASW.

The interval L51–P70 is disordered.

Belongs to the universal ribosomal protein uS14 family. Part of the 30S ribosomal subunit. Contacts proteins S3 and S10.

In terms of biological role, binds 16S rRNA, required for the assembly of 30S particles and may also be responsible for determining the conformation of the 16S rRNA at the A site. The sequence is that of Small ribosomal subunit protein uS14 from Salmonella arizonae (strain ATCC BAA-731 / CDC346-86 / RSK2980).